The chain runs to 231 residues: NADH-ubiquinone oxidoreductase chain 4 (231 aa).

The next 7 helical transmembrane spans lie at 1-21 (PIAG…YGII), 34-54 (MFLP…LTCL), 63-85 (IAYS…TPWG), 89-111 (AMAL…NTTY), 128-148 (ILPM…AIPP), 156-176 (LLIM…LGLS), and 211-231 (LLMI…ELII).

This sequence belongs to the complex I subunit 4 family.

It localises to the mitochondrion membrane. It catalyses the reaction a ubiquinone + NADH + 5 H(+)(in) = a ubiquinol + NAD(+) + 4 H(+)(out). Core subunit of the mitochondrial membrane respiratory chain NADH dehydrogenase (Complex I) that is believed to belong to the minimal assembly required for catalysis. Complex I functions in the transfer of electrons from NADH to the respiratory chain. The immediate electron acceptor for the enzyme is believed to be ubiquinone. This Agkistrodon piscivorus piscivorus (Eastern cottonmouth) protein is NADH-ubiquinone oxidoreductase chain 4 (MT-ND4).